The primary structure comprises 673 residues: Polyunsaturated fatty acid 5-lipoxygenase (673 aa).

Residues 2–117 (PSYTVTVATG…EIVLRDGRAK (116 aa)) enclose the PLAT domain. Residues G17, T18, D19, N44, D45, E47, D79, and D80 each coordinate Ca(2+). Residues 118–673 (LARDDQIHIL…PDRIPNSVAI (556 aa)) form the Lipoxygenase domain. S271 carries the phosphoserine modification. Residues H367 and H372 each coordinate Fe cation. S523 carries the phosphoserine modification. Residues H550, N554, and I673 each contribute to the Fe cation site.

It belongs to the lipoxygenase family. Homodimer. Interacts with ALOX5AP and LTC4S. Interacts with COTL1, the interaction is required for stability and efficient catalytic activity. Interacts with PIK3R1; this interaction bridges ALOX5 with CD40 after CD40 ligation in B cells and leads to the production of reactive oxygen species (ROS). Interacts (via PLAT domain) with DICER1 (via Dicer dsRNA-binding fold domain); this interaction enhances arachidonate 5-lipoxygenase activity and modifies the miRNA precursor processing activity of DICER1. Requires Fe cation as cofactor. In terms of processing, serine phosphorylation by MAPKAPK2 is stimulated by arachidonic acid. Phosphorylation on Ser-523 by PKA has an inhibitory effect. Phosphorylation on Ser-271 prevents export from the nucleus. Phosphorylation at Ser-523 is stimulated by 8-bromo-3',5'-cyclic AMP or prostaglandin E2.

The protein resides in the cytoplasm. It localises to the nucleus matrix. It is found in the nucleus membrane. Its subcellular location is the perinuclear region. The protein localises to the cytosol. The protein resides in the nucleus envelope. It localises to the nucleus intermembrane space. It carries out the reaction (5Z,8Z,11Z,14Z)-eicosatetraenoate + O2 = leukotriene A4 + H2O. It catalyses the reaction 18-HEPE + O2 = (5S)-hydroperoxy-18-hydroxy-(7E,9E,11Z,14Z,16E)-eicosapentaenoate. The enzyme catalyses (18R)-hydroxy-(5Z,8Z,11Z,14Z,16E)-eicosapentaenoate + O2 = (5S)-hydroperoxy-(18R)-hydroxy-(6E,8Z,11Z,14Z,16E)-eicosapentaenoate. The catalysed reaction is (18S)-hydroxy-(5Z,8Z,11Z,14Z,16E)-eicosapentaenoate + O2 = (5S)-hydroperoxy-(18S)-hydroxy-(6E,8Z,11Z,14Z,16E)-eicosapentaenoate. It carries out the reaction (5S)-hydroperoxy-(18S)-hydroxy-(6E,8Z,11Z,14Z,16E)-eicosapentaenoate = (5S,6S)-epoxy-(18S)-hydroxy-(7E,9E,11Z,14Z,16E)-eicosapentaenoate + H2O. It catalyses the reaction (5S)-hydroperoxy-(18R)-hydroxy-(6E,8Z,11Z,14Z,16E)-eicosapentaenoate = (5S,6S)-epoxy-(18R)-hydroxy-(7E,9E,11Z,14Z,16E)-eicosapentaenoate + H2O. The enzyme catalyses (5S)-hydroperoxy-18-hydroxy-(7E,9E,11Z,14Z,16E)-eicosapentaenoate = (5S,6S)-epoxy-18-hydroxy-(7E,9E,11Z,14Z,16E)-eicosapentaenoate + H2O. The catalysed reaction is (5Z,8Z,11Z,14Z)-eicosatetraenoate + O2 = (5S)-hydroperoxy-(6E,8Z,11Z,14Z)-eicosatetraenoate. It carries out the reaction (15S)-hydroxy-(5Z,8Z,11Z,13E)-eicosatetraenoate + O2 = (5S)-hydroperoxy-(15S)-hydroxy-(6E,8Z,11Z,13E)-eicosatetraenoate. It catalyses the reaction (5S)-hydroperoxy-(6E,8Z,11Z,14Z)-eicosatetraenoate = leukotriene A4 + H2O. The enzyme catalyses (5Z,8Z,11Z,14Z)-eicosatetraenoate + O2 = (8S)-hydroperoxy-(5Z,9E,11Z,14Z)-eicosatetraenoate. The catalysed reaction is (5Z,8Z,11Z,14Z)-eicosatetraenoate + O2 = (12S)-hydroperoxy-(5Z,8Z,10E,14Z)-eicosatetraenoate. It carries out the reaction (5Z,8Z)-eicosadienoate + O2 = (5S)-hydroperoxy-(6E,8Z)-eicosadienoate. It catalyses the reaction (12S)-hydroxy-(5Z,8Z,10E,14Z)-eicosatetraenoate + O2 = (5S)-hydroperoxy-(12S)-hydroxy-(6E,8Z,10E,14Z)-eicosatetraenoate. The enzyme catalyses (5Z,8Z,11Z,14Z,17Z)-eicosapentaenoate + O2 = 5-hydroperoxy-(6E,8Z,11Z,14Z,17Z)-eicosapentaenoate. The catalysed reaction is (4Z,7Z,10Z,13Z,16Z,19Z)-docosahexaenoate + O2 = (14S)-hydroperoxy-(4Z,7Z,10Z,12E,16Z,19Z)-docosahexaenoate. It carries out the reaction (4Z,7Z,10Z,13Z,16Z,19Z)-docosahexaenoate + O2 = (7S)-hydroperoxy-(4Z,8E,10Z,13Z,16Z,19Z)-docosahexaenoate. It catalyses the reaction (4Z,7Z,10Z,13Z,16Z,19Z)-docosahexaenoate + O2 = (17S)-hydroperoxy-(4Z,7Z,10Z,13Z,15E,19Z)-docosahexaenoate. It participates in lipid metabolism; leukotriene A4 biosynthesis. In terms of biological role, catalyzes the oxygenation of arachidonate to 5-hydroperoxyeicosatetraenoate (5-HPETE) followed by the dehydration to 5,6- epoxyeicosatetraenoate (Leukotriene A4/LTA4), the first two steps in the biosynthesis of leukotrienes, which are potent mediators of inflammation. Also catalyzes the oxygenation of arachidonate into 8-hydroperoxyicosatetraenoate (8-HPETE) and 12-hydroperoxyicosatetraenoate (12-HPETE). Displays lipoxin synthase activity being able to convert (15S)-HETE into a conjugate tetraene. Although arachidonate is the preferred substrate, this enzyme can also metabolize oxidized fatty acids derived from arachidonate such as (15S)-HETE, eicosapentaenoate (EPA) such as (18R)- and (18S)-HEPE or docosahexaenoate (DHA) which lead to the formation of specialized pro-resolving mediators (SPM) lipoxin and resolvins E and D respectively, therefore it participates in anti-inflammatory responses. Oxidation of DHA directly inhibits endothelial cell proliferation and sprouting angiogenesis via peroxisome proliferator-activated receptor gamma (PPARgamma). It does not catalyze the oxygenation of linoleic acid and does not convert (5S)-HETE to lipoxin isomers. In addition to inflammatory processes, it participates in dendritic cell migration, wound healing through an antioxidant mechanism based on heme oxygenase-1 (HO-1) regulation expression, monocyte adhesion to the endothelium via ITGAM expression on monocytes. Moreover, it helps establish an adaptive humoral immunity by regulating primary resting B cells and follicular helper T cells and participates in the CD40-induced production of reactive oxygen species (ROS) after CD40 ligation in B cells through interaction with PIK3R1 that bridges ALOX5 with CD40. May also play a role in glucose homeostasis, regulation of insulin secretion and palmitic acid-induced insulin resistance via AMPK. Can regulate bone mineralization and fat cell differentiation increases in induced pluripotent stem cells. The polypeptide is Polyunsaturated fatty acid 5-lipoxygenase (Mesocricetus auratus (Golden hamster)).